We begin with the raw amino-acid sequence, 435 residues long: 3-phosphoshikimate 1-carboxyvinyltransferase (435 aa).

Residues K22, S23, and R27 each contribute to the 3-phosphoshikimate site. Residue K22 coordinates phosphoenolpyruvate. 2 residues coordinate phosphoenolpyruvate: G94 and R122. S166, Q168, D314, and K341 together coordinate 3-phosphoshikimate. Q168 is a phosphoenolpyruvate binding site. D314 functions as the Proton acceptor in the catalytic mechanism. Phosphoenolpyruvate-binding residues include R345 and R388.

This sequence belongs to the EPSP synthase family. Monomer.

It localises to the cytoplasm. The catalysed reaction is 3-phosphoshikimate + phosphoenolpyruvate = 5-O-(1-carboxyvinyl)-3-phosphoshikimate + phosphate. It functions in the pathway metabolic intermediate biosynthesis; chorismate biosynthesis; chorismate from D-erythrose 4-phosphate and phosphoenolpyruvate: step 6/7. Functionally, catalyzes the transfer of the enolpyruvyl moiety of phosphoenolpyruvate (PEP) to the 5-hydroxyl of shikimate-3-phosphate (S3P) to produce enolpyruvyl shikimate-3-phosphate and inorganic phosphate. In Vesicomyosocius okutanii subsp. Calyptogena okutanii (strain HA), this protein is 3-phosphoshikimate 1-carboxyvinyltransferase.